The following is a 195-amino-acid chain: MASSSSAALRPFGTARLTPGRQTGRQTQQQISAPEPMIAIALSDMEYLMRSARSSRSSGRSERQPGCTCCCHIAAGVTVIPRVARFSIEGGLSTHTLMNHSDNRIAVKITCSDNNMYRVTPVYATVEPGQSLPLHIARITSDLIKRDRLCVNILEADGNKEAREIFKKNANTRAPASINMALEATNDNQNHHHQE.

A disordered region spans residues 1–35 (MASSSSAALRPFGTARLTPGRQTGRQTQQQISAPE). Low complexity predominate over residues 20–30 (GRQTGRQTQQQ). Residues 76–184 (GVTVIPRVAR…PASINMALEA (109 aa)) form the MSP domain.

This is an uncharacterized protein from Caenorhabditis elegans.